The chain runs to 467 residues: Tubulin beta-1 chain (467 aa).

8 residues coordinate GTP: glutamine 11, glutamate 69, serine 138, glycine 142, threonine 143, glycine 144, asparagine 204, and asparagine 226. Glutamate 69 serves as a coordination point for Mg(2+). Positions 429-444 are enriched in acidic residues; the sequence is TIDDEEGGEEEEGGAE. Residues 429 to 448 are disordered; that stretch reads TIDDEEGGEEEEGGAEEEAR.

It belongs to the tubulin family. In terms of assembly, dimer of alpha and beta chains. A typical microtubule is a hollow water-filled tube with an outer diameter of 25 nm and an inner diameter of 15 nM. Alpha-beta heterodimers associate head-to-tail to form protofilaments running lengthwise along the microtubule wall with the beta-tubulin subunit facing the microtubule plus end conferring a structural polarity. Microtubules usually have 13 protofilaments but different protofilament numbers can be found in some organisms and specialized cells. The cofactor is Mg(2+).

Its subcellular location is the cytoplasm. The protein resides in the cytoskeleton. The protein localises to the spindle. It localises to the nucleus. In terms of biological role, tubulin is the major constituent of microtubules, a cylinder consisting of laterally associated linear protofilaments composed of alpha- and beta-tubulin heterodimers. Microtubules grow by the addition of GTP-tubulin dimers to the microtubule end, where a stabilizing cap forms. Below the cap, tubulin dimers are in GDP-bound state, owing to GTPase activity of alpha-tubulin. The polypeptide is Tubulin beta-1 chain (BETA) (Physarum polycephalum (Slime mold)).